Reading from the N-terminus, the 385-residue chain is Deoxyguanosinetriphosphate triphosphohydrolase-like protein (385 aa).

In terms of domain architecture, HD spans 62-197; it reads RLTHSLEVAQ…VSLADDIAYS (136 aa).

Belongs to the dGTPase family. Type 2 subfamily.

This chain is Deoxyguanosinetriphosphate triphosphohydrolase-like protein, found in Neorickettsia sennetsu (strain ATCC VR-367 / Miyayama) (Ehrlichia sennetsu).